Consider the following 558-residue polypeptide: MRRMLSPRILLSSLPNASARKLFLIVLIIFVFWVVFMTSKDHTEFMVHLNNRIILRRWSIFKEFLHSEELKNTPASVEAELAVTAILEKLNQQIPPRPFQTHSSTTSAKQSTATIHNPQRTYCVGDQLNVLLVAKDYFGNRKEYGGDFLRARIFSPAMKAGTSGKVTDFNNGTYLVSFTLFWEGPVSLSILLMHPSEGVSALWRARNRGYGKIIFTGQFLNGTSPVLTECGLTLNTSAELCQYLDARDHEAFYCLKLPGVPCEALTHMTSKNSNISYLSLEEKLLFRRFNIGVEVVKNLSIVVSLCNNKTNKKKKKCQIGMETPSPGGYTLKGRWITAHCEQNEFRAIKDINNCLTRKLIYLMGDSTLRQWIYYLPKVVKTLKYFDRHGAGPFKTHILLDTERHIFVQWKKHSHPFVTNKLFSMKDDNYIPREIDQVAGDSGTAIVISFGQHFRPFPINVFIRRAINVKNAIERLFLRSPETKVIIKTENIREINEHVEIFSDFHGSIQNLIIRDIFRDLNVGIIDAWDMTVAYRSEDVHPPESVIESQIGMFLNYIC.

Residues 17–37 (ASARKLFLIVLIIFVFWVVFM) form a helical membrane-spanning segment.

Belongs to the NXPE family.

It localises to the membrane. The polypeptide is NXPE family member 2 (Nxpe2) (Mus musculus (Mouse)).